The primary structure comprises 433 residues: Oxysterol-binding protein-like protein OBPa (433 aa).

Belongs to the OSBP family.

The polypeptide is Oxysterol-binding protein-like protein OBPa (OBPA) (Candida albicans (strain SC5314 / ATCC MYA-2876) (Yeast)).